A 253-amino-acid polypeptide reads, in one-letter code: 5-oxoprolinase subunit A (253 aa).

The protein belongs to the LamB/PxpA family. Forms a complex composed of PxpA, PxpB and PxpC.

The enzyme catalyses 5-oxo-L-proline + ATP + 2 H2O = L-glutamate + ADP + phosphate + H(+). In terms of biological role, catalyzes the cleavage of 5-oxoproline to form L-glutamate coupled to the hydrolysis of ATP to ADP and inorganic phosphate. The polypeptide is 5-oxoprolinase subunit A (Syntrophobacter fumaroxidans (strain DSM 10017 / MPOB)).